Reading from the N-terminus, the 91-residue chain is Small ribosomal subunit protein bS18 (91 aa).

The tract at residues M1–R21 is disordered. Residues G12–R21 show a composition bias toward basic residues.

This sequence belongs to the bacterial ribosomal protein bS18 family. As to quaternary structure, part of the 30S ribosomal subunit. Forms a tight heterodimer with protein bS6.

Functionally, binds as a heterodimer with protein bS6 to the central domain of the 16S rRNA, where it helps stabilize the platform of the 30S subunit. In Geotalea uraniireducens (strain Rf4) (Geobacter uraniireducens), this protein is Small ribosomal subunit protein bS18.